The chain runs to 170 residues: MKEEKKLLLREVEEKISASQGFILLRYLGFTAAHSREFRNSLSGVSAEFEVLKKRIFFKAMQSAGFDIDSSDTSGHLGVVFAYDDAVSAAKQVLDFNKQYNDSLVFLAGRIDSANLSGKEVEAVAKLPSMKELRQQIVGLLAAPMSQVVGIMGSALSGVISCIDQKTQKN.

The protein belongs to the universal ribosomal protein uL10 family. In terms of assembly, part of the ribosomal stalk of the 50S ribosomal subunit. The N-terminus interacts with L11 and the large rRNA to form the base of the stalk. The C-terminus forms an elongated spine to which L12 dimers bind in a sequential fashion forming a multimeric L10(L12)X complex.

Its function is as follows. Forms part of the ribosomal stalk, playing a central role in the interaction of the ribosome with GTP-bound translation factors. In Chlamydia abortus (strain DSM 27085 / S26/3) (Chlamydophila abortus), this protein is Large ribosomal subunit protein uL10.